The sequence spans 229 residues: MKQLVLIRHGESAWNLENRFTGWADVDLTPKGAEQALAAGEHLRKAGYEFDVAYTSVLRRAIRTLWHVQDAMDLMWLPVVHSWRLNERHYGALTGLNKAETAAQYGDEQVHIWRRSYDIRPPLLEADDERNPKNDSRYAKLNESDIPLGECLKDNVERVLPLWNESIAPALKANKRVLLVAHGNSIRSLIKYLDQMSDEAIMEVNVPNGIPLVYELDDNLKPIQHFYLD.

Substrate contacts are provided by residues 8–15 (RHGESAWN), 21–22 (TG), arginine 60, 87–90 (ERHY), lysine 98, 114–115 (RR), and 183–184 (GN). The Tele-phosphohistidine intermediate role is filled by histidine 9. The active-site Proton donor/acceptor is glutamate 87.

It belongs to the phosphoglycerate mutase family. BPG-dependent PGAM subfamily. In terms of assembly, homodimer.

The catalysed reaction is (2R)-2-phosphoglycerate = (2R)-3-phosphoglycerate. It functions in the pathway carbohydrate degradation; glycolysis; pyruvate from D-glyceraldehyde 3-phosphate: step 3/5. Functionally, catalyzes the interconversion of 2-phosphoglycerate and 3-phosphoglycerate. The protein is 2,3-bisphosphoglycerate-dependent phosphoglycerate mutase of Polynucleobacter asymbioticus (strain DSM 18221 / CIP 109841 / QLW-P1DMWA-1) (Polynucleobacter necessarius subsp. asymbioticus).